The primary structure comprises 208 residues: Large ribosomal subunit protein bL25 (208 aa).

A compositionally biased stretch (acidic residues) spans 185–195 (DLEEETGEAEG). Residues 185 to 208 (DLEEETGEAEGETAAAPAEEGAES) are disordered. Residues 196 to 208 (ETAAAPAEEGAES) show a composition bias toward low complexity.

The protein belongs to the bacterial ribosomal protein bL25 family. CTC subfamily. Part of the 50S ribosomal subunit; part of the 5S rRNA/L5/L18/L25 subcomplex. Contacts the 5S rRNA. Binds to the 5S rRNA independently of L5 and L18.

Its function is as follows. This is one of the proteins that binds to the 5S RNA in the ribosome where it forms part of the central protuberance. This Rhodococcus opacus (strain B4) protein is Large ribosomal subunit protein bL25.